Consider the following 469-residue polypeptide: uncharacterized protein (469 aa).

The N-terminal stretch at M1 to G19 is a signal peptide. 7 helical membrane-spanning segments follow: residues I199–L219, A236–I256, A283–V303, Y305–L325, I338–A358, I386–L406, and G413–F433.

Its subcellular location is the membrane. This is an uncharacterized protein from Schizosaccharomyces pombe (strain 972 / ATCC 24843) (Fission yeast).